The chain runs to 398 residues: Lysophospholipid transporter LplT (398 aa).

12 helical membrane-spanning segments follow: residues 16 to 36, 53 to 73, 91 to 111, 139 to 159, 163 to 183, 195 to 213, 227 to 247, 253 to 273, 286 to 306, 310 to 330, 344 to 364, and 372 to 392; these read MIAVICAQFLSAFGDNALLFA, ILQMAFVATYIILAPFVGQVA, AGALVICFGFNPFLGYTLVGV, LMEASTIAAILIGSVAGGILA, IVAALAVCAVVYAAAVIANLY, SWTPRAMTQAFFNACVVLW, LFWGAGVTLRFLLVLWVPVAL, ATPTLLNAMVAVGIVIGAGAA, MPAGILIGVAVAIFALQTTLF, ALLLIIGVLGGFFVVPLNALL, IAVQNLGENTAMLLMLGLYSL, and VVGVGIGFGVVFALAISALWL.

It belongs to the major facilitator superfamily. LplT (TC 2.A.1.42) family.

It localises to the cell inner membrane. In terms of biological role, catalyzes the facilitated diffusion of 2-acyl-glycero-3-phosphoethanolamine (2-acyl-GPE) into the cell. This Serratia proteamaculans (strain 568) protein is Lysophospholipid transporter LplT.